A 194-amino-acid chain; its full sequence is Adenylate kinase (194 aa).

ATP is bound at residue 10 to 15 (GAGKGT). Positions 30 to 59 (STGDMLRAAVAQQSEIGKRAKAVMDAGQLV) are NMP. AMP contacts are provided by residues Thr31, Arg36, 57 to 59 (QLV), 85 to 88 (GYPR), and Gln92. An LID region spans residues 126–142 (SRVAETIAKGGQVRSDD). ATP is bound at residue Arg127. AMP contacts are provided by Arg139 and Arg150. Ala178 provides a ligand contact to ATP.

It belongs to the adenylate kinase family. In terms of assembly, monomer.

Its subcellular location is the cytoplasm. It catalyses the reaction AMP + ATP = 2 ADP. It participates in purine metabolism; AMP biosynthesis via salvage pathway; AMP from ADP: step 1/1. Functionally, catalyzes the reversible transfer of the terminal phosphate group between ATP and AMP. Plays an important role in cellular energy homeostasis and in adenine nucleotide metabolism. The protein is Adenylate kinase of Brucella abortus (strain S19).